The chain runs to 328 residues: Malate dehydrogenase (328 aa).

11–17 (GAAGQIG) is a binding site for NAD(+). Arg-94 and Arg-100 together coordinate substrate. Residues Asn-107, Gln-114, and 131–133 (VGN) contribute to the NAD(+) site. Substrate is bound by residues Asn-133 and Arg-164. The active-site Proton acceptor is the His-189.

This sequence belongs to the LDH/MDH superfamily. MDH type 2 family.

The enzyme catalyses (S)-malate + NAD(+) = oxaloacetate + NADH + H(+). Its function is as follows. Catalyzes the reversible oxidation of malate to oxaloacetate. This chain is Malate dehydrogenase, found in Xanthomonas oryzae pv. oryzae (strain MAFF 311018).